The chain runs to 398 residues: Yellow-related salivary protein SP04 (398 aa).

Positions 1–18 (MKWFLFLLSTIFVQGILG) are cleaved as a signal peptide. The tract at residues 73–94 (TLTEIERKKHPERSPPLSKFSG) is disordered. The span at 75-85 (TEIERKKHPER) shows a compositional bias: basic and acidic residues.

Belongs to the major royal jelly protein family. In terms of tissue distribution, female salivary gland (at protein level).

Its subcellular location is the secreted. Its function is as follows. Probably modulates blood feeding of sand flies on vertebrate species by binding and sequestering different mediators involved in the host response. Binds biogenic amines. Binds serotonin with high affinity. Binds histamine with low affinity. This is Yellow-related salivary protein SP04 from Phlebotomus argentipes (Phlebotomine sand fly).